The chain runs to 309 residues: Peptide methionine sulfoxide reductase MsrA/MsrB (309 aa).

The peptide methionine sulfoxide reductase A stretch occupies residues 1 to 153 (MIYLAGGCFW…PNGYCHIDIN (153 aa)). Cys8 is an active-site residue. The MsrB domain occupies 170–293 (ATEIKEKLSA…NSLSITFIPK (124 aa)). The active-site Nucleophile is Cys282.

The protein in the N-terminal section; belongs to the MsrA Met sulfoxide reductase family. In the C-terminal section; belongs to the MsrB Met sulfoxide reductase family.

It carries out the reaction L-methionyl-[protein] + [thioredoxin]-disulfide + H2O = L-methionyl-(S)-S-oxide-[protein] + [thioredoxin]-dithiol. The enzyme catalyses [thioredoxin]-disulfide + L-methionine + H2O = L-methionine (S)-S-oxide + [thioredoxin]-dithiol. The catalysed reaction is L-methionyl-[protein] + [thioredoxin]-disulfide + H2O = L-methionyl-(R)-S-oxide-[protein] + [thioredoxin]-dithiol. Its function is as follows. Has an important function as a repair enzyme for proteins that have been inactivated by oxidation. Catalyzes the reversible oxidation-reduction of methionine sulfoxide in proteins to methionine. This is Peptide methionine sulfoxide reductase MsrA/MsrB (msrAB) from Streptococcus pyogenes serotype M1.